A 205-amino-acid polypeptide reads, in one-letter code: MSHKKQDAFQGLIDALKVLPNVGPKSAQRIAYHLLQHKRKEAEKLVDALQTALKQVHHCAMCNTFCEGGLCDICADETRDGRRLMVVHMPADVSNMEAANCHDGLYFVLMGQINTALGMDVSAIALDRLAQRLGGGEVEEIIIATAFTAEGNATAYVLSEFFKNLPYKVSRLSQGIPLGGELEYVDAGTLAQAVYERRLIKEGGA.

The segment at 59–74 (CAMCNTFCEGGLCDIC) adopts a C4-type zinc-finger fold. The Toprim domain occupies 82 to 177 (RRLMVVHMPA…KVSRLSQGIP (96 aa)).

It belongs to the RecR family.

In terms of biological role, may play a role in DNA repair. It seems to be involved in an RecBC-independent recombinational process of DNA repair. It may act with RecF and RecO. The polypeptide is Recombination protein RecR (Neisseria meningitidis serogroup C (strain 053442)).